The following is a 244-amino-acid chain: MSQLDLNALNELPKVDRVLALAETNAQLETLTAEERVAWALENLPGEYVLSSSFGIQAAVSLHLVNQIRPDIPVILTDTGYLFPETYQFIDELTDKLKLNLKVYRAGESPAWQEARYGKLWEQGVEGIEKYNEINKVEPMNRALKELNAQTWFAGLRREQSGSRAHLPVLAIQRGVFKVLPIIDWDNRTVYQYLQKHGLKYHPLWAQGYLSVGDTHTTRKWEPGMAEEETRFFGLKRECGLHEG.

Cys239 (nucleophile; cysteine thiosulfonate intermediate) is an active-site residue.

It belongs to the PAPS reductase family. CysH subfamily.

It is found in the cytoplasm. The enzyme catalyses [thioredoxin]-disulfide + sulfite + adenosine 3',5'-bisphosphate + 2 H(+) = [thioredoxin]-dithiol + 3'-phosphoadenylyl sulfate. Its pathway is sulfur metabolism; hydrogen sulfide biosynthesis; sulfite from sulfate: step 3/3. Its function is as follows. Catalyzes the formation of sulfite from phosphoadenosine 5'-phosphosulfate (PAPS) using thioredoxin as an electron donor. In Salmonella typhi, this protein is Phosphoadenosine 5'-phosphosulfate reductase.